The chain runs to 663 residues: UvrABC system protein B (663 aa).

A compositionally biased stretch (basic and acidic residues) spans 1-10 (MIDKRDDKPF). A disordered region spans residues 1–23 (MIDKRDDKPFKLKSKYKPSGDQP). The Helicase ATP-binding domain maps to 31–271 (DNIEGGEKAQ…EQSIAKIQAE (241 aa)). Position 44–51 (44–51 (GATGTGKT)) interacts with ATP. The Beta-hairpin signature appears at 97 to 120 (YYDYYQPEAYVPSSDTYIEKDSSV). The Helicase C-terminal domain occupies 435–601 (QMDDLLGEIN…TIKKDIRGLI (167 aa)). The UVR domain maps to 627–662 (KEAINALQKQMQEAAELLDFELAAQMRDLILELKLM).

Belongs to the UvrB family. In terms of assembly, forms a heterotetramer with UvrA during the search for lesions. Interacts with UvrC in an incision complex.

It localises to the cytoplasm. The UvrABC repair system catalyzes the recognition and processing of DNA lesions. A damage recognition complex composed of 2 UvrA and 2 UvrB subunits scans DNA for abnormalities. Upon binding of the UvrA(2)B(2) complex to a putative damaged site, the DNA wraps around one UvrB monomer. DNA wrap is dependent on ATP binding by UvrB and probably causes local melting of the DNA helix, facilitating insertion of UvrB beta-hairpin between the DNA strands. Then UvrB probes one DNA strand for the presence of a lesion. If a lesion is found the UvrA subunits dissociate and the UvrB-DNA preincision complex is formed. This complex is subsequently bound by UvrC and the second UvrB is released. If no lesion is found, the DNA wraps around the other UvrB subunit that will check the other stand for damage. In Streptococcus pyogenes serotype M4 (strain MGAS10750), this protein is UvrABC system protein B.